Here is a 622-residue protein sequence, read N- to C-terminus: Cilia- and flagella-associated protein 206 (622 aa).

This sequence belongs to the CFAP206 family.

Its subcellular location is the cytoplasm. The protein resides in the cytoskeleton. It is found in the cilium axoneme. It localises to the cilium basal body. In terms of biological role, essential for sperm motility and is involved in the regulation of the beating frequency of motile cilia on the epithelial cells of the respiratory tract. Required for the establishment of radial spokes in sperm flagella. The sequence is that of Cilia- and flagella-associated protein 206 from Bos taurus (Bovine).